The following is a 445-amino-acid chain: Histamine H3 receptor (445 aa).

Residues methionine 1–alanine 39 lie on the Extracellular side of the membrane. N-linked (GlcNAc...) asparagine glycosylation is present at asparagine 11. Residues leucine 40–valine 60 traverse the membrane as a helical segment. Residues alanine 61 to asparagine 70 lie on the Cytoplasmic side of the membrane. The chain crosses the membrane as a helical span at residues phenylalanine 71–tyrosine 91. At valine 92–lysine 108 the chain is on the extracellular side. Cysteine 107 and cysteine 188 are disulfide-bonded. Residues leucine 109–serine 129 form a helical membrane-spanning segment. Residues tyrosine 130–methionine 156 are Cytoplasmic-facing. The chain crosses the membrane as a helical span at residues leucine 157–leucine 177. Topologically, residues serine 178 to tryptophan 196 are extracellular. Residues tyrosine 197–phenylalanine 217 form a helical membrane-spanning segment. Residues asparagine 218–serine 359 lie on the Cytoplasmic side of the membrane. Disordered stretches follow at residues arginine 237 to glycine 260 and glutamate 288 to arginine 336. Over residues proline 242 to glycine 257 the composition is skewed to pro residues. Residues threonine 290–serine 299 show a composition bias toward gly residues. Low complexity predominate over residues valine 300–arginine 312. A helical membrane pass occupies residues leucine 360–isoleucine 380. At arginine 381–glutamate 395 the chain is on the extracellular side. A helical transmembrane segment spans residues threonine 396 to histidine 416. Residues histidine 417–lysine 445 lie on the Cytoplasmic side of the membrane. Residue serine 439 is modified to Phosphoserine.

It belongs to the G-protein coupled receptor 1 family. In terms of tissue distribution, expressed predominantly in the CNS, with the greatest expression in the thalamus and caudate nucleus. The various isoforms are mainly coexpressed in brain, but their relative expression level varies in a region-specific manner. Isoform 3 and isoform 7 are highly expressed in the thalamus, caudate nucleus and cerebellum while isoform 5 and isoform 6 show a poor expression. Isoform 5 and isoform 6 show a high expression in the amygdala, substantia nigra, cerebral cortex and hypothalamus. Isoform 7 is not found in hypothalamus or substantia nigra.

The protein resides in the cell membrane. The H3 subclass of histamine receptors could mediate the histamine signals in CNS and peripheral nervous system. Signals through the inhibition of adenylate cyclase and displays high constitutive activity (spontaneous activity in the absence of agonist). Agonist stimulation of isoform 3 neither modified adenylate cyclase activity nor induced intracellular calcium mobilization. The chain is Histamine H3 receptor (HRH3) from Homo sapiens (Human).